Reading from the N-terminus, the 299-residue chain is MKTLQSTLLLFLFVPLIKPAPPSQQDSRIIYDYGTDNLEETFFSQDYEDKYLDGKSTKEKETMIIVPDEKSFQLQKDETITPLPPKKENDEMPTCLLCVCLSGSVYCEEVDIDAVPPLPKESAYLYARFNKIKKLTAKDFADIPNLRRLDFTGNLIEDIEDGTFSKLSLLEELTLAENQLLKLPVLPPKLTLFNAKYNKIKSRGIKANTFKKLHNLSFLYLDHNALESVPLNLPESLRVIHLQFNNITSITDDTFCKANDTSYIRDRIEEIRLEGNPVILGKHPNSFICLKRLPIGSYI.

Residues 1-19 form the signal peptide; that stretch reads MKTLQSTLLLFLFVPLIKP. The N-linked (GlcNAc...) (keratan sulfate) asparagine glycan is linked to Asn-89. 7 LRR repeats span residues 113 to 132, 133 to 156, 157 to 180, 181 to 200, 201 to 226, 227 to 247, and 248 to 278; these read DAVP…FNKI, KKLT…GNLI, EDIE…ENQL, LKLP…YNKI, KSRG…HNAL, ESVP…FNNI, and TSIT…GNPV. Asn-215 carries an N-linked (GlcNAc...) (keratan sulfate) asparagine glycan. The N-linked (GlcNAc...) asparagine glycan is linked to Asn-246. Cysteines 256 and 289 form a disulfide. An N-linked (GlcNAc...) (keratan sulfate) asparagine glycan is attached at Asn-259.

It belongs to the small leucine-rich proteoglycan (SLRP) family. SLRP class III subfamily. Post-translationally, contains keratan sulfate. Keratan sulfate attachment is observed in the cornea but the protein also exists in other tissues without keratan sulfate. In terms of processing, the 12 kDa OIF in bone and the 25 kDa KSPG25 protein in cornea are probably proteolytic fragments. As to expression, bone and cornea.

The protein localises to the secreted. It localises to the extracellular space. The protein resides in the extracellular matrix. Its function is as follows. Induces bone formation in conjunction with TGF-beta-1 or TGF-beta-2. This chain is Mimecan (OGN), found in Bos taurus (Bovine).